The primary structure comprises 256 residues: Necrosis-inducing protein NPP1 (256 aa).

A Conserved undecapeptide motif motif is present at residues 111–121 (AIMYAWYFPKG). A Conserved heptapeptide motif motif is present at residues 133–139 (GHRHEWE).

The protein belongs to the Necrosis inducing protein (NPP1) family.

It localises to the secreted. In terms of biological role, secreted effector that acts as a pathogen-associated molecular pattern (PAMP) recognized by the plant immune system. In Phytophthora cinnamomi (Cinnamon fungus), this protein is Necrosis-inducing protein NPP1.